We begin with the raw amino-acid sequence, 225 residues long: Thymidylate kinase (225 aa).

10-17 (GPEGAGKT) serves as a coordination point for ATP.

Belongs to the thymidylate kinase family.

The enzyme catalyses dTMP + ATP = dTDP + ADP. Its function is as follows. Phosphorylation of dTMP to form dTDP in both de novo and salvage pathways of dTTP synthesis. This Geobacillus thermodenitrificans (strain NG80-2) protein is Thymidylate kinase.